The following is a 170-amino-acid chain: Adenine phosphoribosyltransferase (170 aa).

The protein belongs to the purine/pyrimidine phosphoribosyltransferase family. As to quaternary structure, homodimer.

It is found in the cytoplasm. The catalysed reaction is AMP + diphosphate = 5-phospho-alpha-D-ribose 1-diphosphate + adenine. The protein operates within purine metabolism; AMP biosynthesis via salvage pathway; AMP from adenine: step 1/1. Functionally, catalyzes a salvage reaction resulting in the formation of AMP, that is energically less costly than de novo synthesis. This is Adenine phosphoribosyltransferase from Mesoplasma florum (strain ATCC 33453 / NBRC 100688 / NCTC 11704 / L1) (Acholeplasma florum).